Consider the following 266-residue polypeptide: 4-hydroxy-tetrahydrodipicolinate reductase (266 aa).

Residues 8–13 (GAAGRM) and Glu-33 each bind NAD(+). Arg-34 provides a ligand contact to NADP(+). NAD(+) is bound by residues 97 to 99 (GST) and 121 to 124 (APNM). His-154 serves as the catalytic Proton donor/acceptor. His-155 is a binding site for (S)-2,3,4,5-tetrahydrodipicolinate. The Proton donor role is filled by Lys-158. Position 164-165 (164-165 (GT)) interacts with (S)-2,3,4,5-tetrahydrodipicolinate.

This sequence belongs to the DapB family.

The protein resides in the cytoplasm. The catalysed reaction is (S)-2,3,4,5-tetrahydrodipicolinate + NAD(+) + H2O = (2S,4S)-4-hydroxy-2,3,4,5-tetrahydrodipicolinate + NADH + H(+). The enzyme catalyses (S)-2,3,4,5-tetrahydrodipicolinate + NADP(+) + H2O = (2S,4S)-4-hydroxy-2,3,4,5-tetrahydrodipicolinate + NADPH + H(+). The protein operates within amino-acid biosynthesis; L-lysine biosynthesis via DAP pathway; (S)-tetrahydrodipicolinate from L-aspartate: step 4/4. In terms of biological role, catalyzes the conversion of 4-hydroxy-tetrahydrodipicolinate (HTPA) to tetrahydrodipicolinate. The polypeptide is 4-hydroxy-tetrahydrodipicolinate reductase (Trichlorobacter lovleyi (strain ATCC BAA-1151 / DSM 17278 / SZ) (Geobacter lovleyi)).